Reading from the N-terminus, the 252-residue chain is Flap endonuclease Xni (252 aa).

Asp105 contacts Mg(2+). A 5'-3' exonuclease domain is found at Glu162–Lys251. The K(+) site is built by Leu172, Ala173, Pro181, Ile183, and Ile186. Positions Gly185 to Ser190 are interaction with DNA.

This sequence belongs to the Xni family. It depends on Mg(2+) as a cofactor. K(+) is required as a cofactor.

Has flap endonuclease activity. During DNA replication, flap endonucleases cleave the 5'-overhanging flap structure that is generated by displacement synthesis when DNA polymerase encounters the 5'-end of a downstream Okazaki fragment. This is Flap endonuclease Xni from Shewanella denitrificans (strain OS217 / ATCC BAA-1090 / DSM 15013).